The chain runs to 425 residues: Putative E3 ubiquitin-protein ligase UBR7 (425 aa).

The UBR-type zinc finger occupies 44–116 (EKCSYSQGSV…KNLECKLFPD (73 aa)). The segment at 132–188 (GLYCVCKRPYPDPEDEVPDEMIQCVVCEDWFHGRHLGAIPPESGDFQEMVCQACMRR) adopts a PHD-type; atypical zinc-finger fold. The disordered stretch occupies residues 212-269 (LPNATGMGDEDVSKPENGAPQDNGLKEDAPEHGRDSVNEVKAEQKNEPCSSSSSESDL). Residues K225 and K252 each participate in a glycyl lysine isopeptide (Lys-Gly) (interchain with G-Cter in SUMO2) cross-link. Basic and acidic residues predominate over residues 235 to 257 (GLKEDAPEHGRDSVNEVKAEQKN). S264 is subject to Phosphoserine. Residues K274 and K398 each participate in a glycyl lysine isopeptide (Lys-Gly) (interchain with G-Cter in SUMO2) cross-link.

In terms of tissue distribution, expressed in testis and sperm (at protein level).

It catalyses the reaction S-ubiquitinyl-[E2 ubiquitin-conjugating enzyme]-L-cysteine + [acceptor protein]-L-lysine = [E2 ubiquitin-conjugating enzyme]-L-cysteine + N(6)-ubiquitinyl-[acceptor protein]-L-lysine.. It functions in the pathway protein modification; protein ubiquitination. E3 ubiquitin-protein ligase which is a component of the N-end rule pathway. Recognizes and binds to proteins bearing specific N-terminal residues that are destabilizing according to the N-end rule, leading to their ubiquitination and subsequent degradation. This is Putative E3 ubiquitin-protein ligase UBR7 (Ubr7) from Mus musculus (Mouse).